Here is a 148-residue protein sequence, read N- to C-terminus: Leghemoglobin-1 (148 aa).

In terms of domain architecture, Globin spans 2 to 146 (GFTDKQEALV…LATAIKKAMK (145 aa)). A nitrated tyrosine mark is found at tyrosine 24 and tyrosine 29. A heme b-binding site is contributed by serine 44. Serine 44 carries the phosphoserine modification. Histidine 61 lines the O2 pocket. Heme b-binding residues include histidine 93 and lysine 96. Position 134 is a nitrated tyrosine (tyrosine 134).

The protein belongs to the plant globin family. In terms of assembly, monomer. Nitrated in effective nodules and particularly in hypoxic conditions; this mechanism may play a protective role in the symbiosis by buffering toxic peroxynitrite NO(2)(-). Nitration level decrease during nodule senescence. In terms of processing, phosphorylation at Ser-44 disrupts the molecular environment of its porphyrin ring oxygen binding pocket, thus leading to a reduced oxygen consumption and to the delivery of oxygen O(2) to symbiosomes. In terms of tissue distribution, root nodules.

The protein localises to the cytoplasm. It localises to the cytosol. It is found in the nucleus. In terms of biological role, leghemoglobin that reversibly binds oxygen O(2) through a pentacoordinated heme iron. In root nodules, facilitates the diffusion of oxygen to the bacteroids while preventing the bacterial nitrogenase from being inactivated by buffering dioxygen, nitric oxide and carbon monoxide, and promoting the formation of reactive oxygen species (ROS, e.g. H(2)O(2)). This role is essential for symbiotic nitrogen fixation (SNF). The chain is Leghemoglobin-1 from Pisum sativum (Garden pea).